The chain runs to 130 residues: Small ribosomal subunit protein uS13 (130 aa).

Residues Pro-97–Thr-116 show a composition bias toward basic residues. The tract at residues Pro-97–Lys-130 is disordered. Residues Lys-121 to Lys-130 are compositionally biased toward polar residues.

The protein belongs to the universal ribosomal protein uS13 family. Part of the 30S ribosomal subunit. Forms a loose heterodimer with protein S19. Forms two bridges to the 50S subunit in the 70S ribosome.

Its function is as follows. Located at the top of the head of the 30S subunit, it contacts several helices of the 16S rRNA. In the 70S ribosome it contacts the 23S rRNA (bridge B1a) and protein L5 of the 50S subunit (bridge B1b), connecting the 2 subunits; these bridges are implicated in subunit movement. Contacts the tRNAs in the A and P-sites. This Endomicrobium trichonymphae protein is Small ribosomal subunit protein uS13.